Reading from the N-terminus, the 174-residue chain is Peptide deformylase (174 aa).

Positions 96 and 138 each coordinate Fe cation. Glutamate 139 is an active-site residue. Residue histidine 142 coordinates Fe cation.

This sequence belongs to the polypeptide deformylase family. Fe(2+) is required as a cofactor.

The catalysed reaction is N-terminal N-formyl-L-methionyl-[peptide] + H2O = N-terminal L-methionyl-[peptide] + formate. Its function is as follows. Removes the formyl group from the N-terminal Met of newly synthesized proteins. Requires at least a dipeptide for an efficient rate of reaction. N-terminal L-methionine is a prerequisite for activity but the enzyme has broad specificity at other positions. In Helicobacter pylori (strain P12), this protein is Peptide deformylase.